The sequence spans 423 residues: Polyglutamylase complex subunit TTLL1 (423 aa).

A TTL domain is found at 1–367 (MAGKVKWVTD…NGEIPDCKWN (367 aa)). Residues K138, 144-145 (QG), 181-184 (SLYI), and 194-196 (KFD) each bind ATP. A protein is bound at residue Q144. R220 serves as a coordination point for L-glutamate. 241–242 (TN) lines the ATP pocket. K259 lines the L-glutamate pocket. Mg(2+)-binding residues include D313, E326, and N328. Residue K344 coordinates L-glutamate. Residues 391-423 (GADRELRSRQGQSLGPRAGRSRDSGRAVLTTWK) are disordered.

The protein belongs to the tubulin polyglutamylase family. In terms of assembly, part of the neuronal tubulin polyglutamylase complex which contains TPGS1, TPGS2, TTLL1, LRRC49 and NICN1. Interacts with PCM1, CSTPP1 and LRRC49. It depends on Mg(2+) as a cofactor. Expressed in a wide range of tissues. Has a stronger expression in heart, brain and testis.

The protein localises to the cytoplasm. It is found in the cytoskeleton. It localises to the cilium basal body. Its subcellular location is the cilium axoneme. The protein resides in the cell projection. The protein localises to the cilium. It is found in the flagellum. It carries out the reaction (L-glutamyl)(n)-gamma-L-glutamyl-L-glutamyl-[protein] + L-glutamate + ATP = (L-glutamyl)(n+1)-gamma-L-glutamyl-L-glutamyl-[protein] + ADP + phosphate + H(+). Catalytic subunit of a polyglutamylase complex which modifies tubulin, generating side chains of glutamate on the gamma-carboxyl group of specific glutamate residues within the C-terminal tail of tubulin. Probably involved in the side-chain elongation step of the polyglutamylation reaction rather than the initiation step. Modifies both alpha- and beta-tubulins with a preference for the alpha-tail. Unlike most polyglutamylases of the tubulin--tyrosine ligase family, only displays a catalytic activity when in complex with other proteins as it is most likely lacking domains important for autonomous activity. Part of the neuronal tubulin polyglutamylase complex. Mediates cilia and flagella polyglutamylation which is essential for their biogenesis and motility. Involved in respiratory motile cilia function through the regulation of beating asymmetry. Essential for sperm flagella biogenesis, motility and male fertility. Involved in KLF4 glutamylation which impedes its ubiquitination, thereby leading to somatic cell reprogramming, pluripotency maintenance and embryogenesis. This chain is Polyglutamylase complex subunit TTLL1, found in Homo sapiens (Human).